The chain runs to 280 residues: Protein FAM131C (280 aa).

Positions 195–280 are disordered; it reads QDSLPSGPSQ…LWEEDEVFYN (86 aa). The span at 197–211 shows a compositional bias: polar residues; that stretch reads SLPSGPSQDDSLQAF. The span at 215–227 shows a compositional bias: pro residues; it reads SPSPDSCPSPEEP.

It belongs to the FAM131 family.

The chain is Protein FAM131C (FAM131C) from Homo sapiens (Human).